The chain runs to 441 residues: Sec-independent protein translocase protein TatCo (441 aa).

A disordered region spans residues 1-185 (MADEERDAGL…LVGEAPESDQ (185 aa)). Residues 13–22 (ADDETDASDD) show a composition bias toward acidic residues. Residues 51–62 (TPRDETVTHGSD) show a composition bias toward basic and acidic residues. Residues 75 to 104 (DNGDDSDSDTDAAPDDADDSATDSDADSDD) are compositionally biased toward acidic residues. A compositionally biased stretch (basic and acidic residues) spans 105 to 117 (EPRLLADDEHTSH). Acidic residues-rich tracts occupy residues 122 to 138 (TYDD…DPDA) and 164 to 173 (EDADFDDEDV). 6 consecutive transmembrane segments (helical) span residues 200–220 (LAVV…GADI), 276–296 (VAGL…TYLF), 317–337 (LVLA…AIFA), 357–377 (FNLI…PLFV), 395–415 (RLLF…DPTG), and 416–436 (MAPI…LAAL).

This sequence belongs to the TatC family. As to quaternary structure, forms a complex with TatA.

It is found in the cell membrane. In terms of biological role, part of the twin-arginine translocation (Tat) system that transports large folded proteins containing a characteristic twin-arginine motif in their signal peptide across membranes. The polypeptide is Sec-independent protein translocase protein TatCo (Haloferax volcanii (strain ATCC 29605 / DSM 3757 / JCM 8879 / NBRC 14742 / NCIMB 2012 / VKM B-1768 / DS2) (Halobacterium volcanii)).